The following is a 1616-amino-acid chain: Putative inactive phenolphthiocerol synthesis polyketide synthase type I Pks1 (1616 aa).

Residues 83–397 are acyltransferase; sequence TVVVFPGQGA…GQVFTTGVPV (315 aa). The active-site For acyltransferase activity is the Ser-174. The segment at 445–567 is N-terminal hotdog fold; that stretch reads HALLGAVVER…GMLGVAAAET (123 aa). The interval 445 to 605 is dehydratase; the sequence is HALLGAVVER…YAYGPAFQGL (161 aa). In terms of domain architecture, PKS/mFAS DH spans 445 to 719; it reads HALLGAVVER…TRPITAEQLR (275 aa). The active-site Proton acceptor; for dehydratase activity is His-477. A C-terminal hotdog fold region spans residues 579–719; sequence AESVDISDGY…TRPITAEQLR (141 aa). The active-site Proton donor; for dehydratase activity is Asp-640. The segment at 910 to 1215 is enoylreductase; the sequence is GTLEDLVIQP…QARHIGKVVL (306 aa). NADP(+)-binding positions include 1040–1057 and 1229–1244; these read VLIH…VQLA and TVVI…GVLA. Positions 1228 to 1409 are beta-ketoacyl reductase; it reads GTVVITGATG…SLAWGLWEQP (182 aa). The Carrier domain maps to 1514-1589; the sequence is ELLVGLVCLQ…AVAEYVAQQM (76 aa). Ser-1549 carries the post-translational modification O-(pantetheine 4'-phosphoryl)serine. The segment covering 1588-1604 has biased composition (polar residues); the sequence is QMSGSRPTESGDPTSQV. The disordered stretch occupies residues 1588 to 1616; sequence QMSGSRPTESGDPTSQVVEPAAAEVSVHA.

Requires pantetheine 4'-phosphate as cofactor.

It functions in the pathway lipid metabolism; fatty acid biosynthesis. Its function is as follows. May play a role in phthiocerol biosynthesis. In Mycobacterium tuberculosis (strain ATCC 25618 / H37Rv), this protein is Putative inactive phenolphthiocerol synthesis polyketide synthase type I Pks1 (pks1).